A 92-amino-acid chain; its full sequence is UPF0250 protein Avin_08440 (92 aa).

This sequence belongs to the UPF0250 family.

The protein is UPF0250 protein Avin_08440 of Azotobacter vinelandii (strain DJ / ATCC BAA-1303).